The chain runs to 182 residues: Glutamyl-tRNA(Gln) amidotransferase subunit F, mitochondrial (182 aa).

The protein belongs to the GatF family. As to quaternary structure, subunit of the heterotrimeric GatFAB amidotransferase (AdT) complex, composed of A, B and F subunits.

The protein resides in the mitochondrion inner membrane. It catalyses the reaction L-glutamyl-tRNA(Gln) + L-glutamine + ATP + H2O = L-glutaminyl-tRNA(Gln) + L-glutamate + ADP + phosphate + H(+). Allows the formation of correctly charged Gln-tRNA(Gln) through the transamidation of misacylated Glu-tRNA(Gln) in the mitochondria. The reaction takes place in the presence of glutamine and ATP through an activated gamma-phospho-Glu-tRNA(Gln). Required for proper protein synthesis within the mitochondrion. This is Glutamyl-tRNA(Gln) amidotransferase subunit F, mitochondrial from Candida tropicalis (strain ATCC MYA-3404 / T1) (Yeast).